Reading from the N-terminus, the 85-residue chain is U4-theraphotoxin-Hhn1a (85 aa).

The signal sequence occupies residues 1–22 (MKVTLIAILTCAAVLVLHTTAA). Positions 23 to 48 (EELEAESQLMEVGMPDTELEAVDEER) are excised as a propeptide. 3 cysteine pairs are disulfide-bonded: Cys-52–Cys-66, Cys-56–Cys-77, and Cys-71–Cys-82.

The protein belongs to the neurotoxin 12 (Hwtx-2) family. 02 (Hwtx-2) subfamily. As to quaternary structure, monomer. Expressed by the venom gland.

It is found in the secreted. Neurotoxin active on both insects and mammals. The chain is U4-theraphotoxin-Hhn1a from Cyriopagopus hainanus (Chinese bird spider).